The following is a 948-amino-acid chain: Protocadherin alpha-2 (948 aa).

The signal sequence occupies residues 1 to 22; the sequence is MASSIRRGLGAWTRLLSLLLLA. The Extracellular segment spans residues 23–697; sequence AWEVGSGQLR…GSEATLVDVN (675 aa). 6 consecutive Cadherin domains span residues 30 to 133, 157 to 242, 243 to 350, 351 to 455, 456 to 565, and 588 to 678; these read QLRY…PPVF, ASDA…EPTF, AQSV…TPEV, SITS…APAF, AQPE…APAL, and GHVV…APKA. N-linked (GlcNAc...) asparagine glycosylation is found at N257, N265, N362, and N548. A helical membrane pass occupies residues 698–718; it reads VYLIIAICAVSSLLVLTVLLY. Over 719 to 948 the chain is Cytoplasmic; sequence TALRCSVPAT…GNSTTDNSDQ (230 aa). Residues 734 to 737 form a PXXP 1 repeat; sequence PGKP. Positions 734-892 are 5 X 4 AA repeats of P-X-X-P; sequence PGKPTLVCSS…PDKFIIPGSP (159 aa). Disordered stretches follow at residues 755 to 801, 829 to 854, and 868 to 948; these read RQRV…RQPN, GPGGPDQQWPTVSSATPEPEAGEVSP, and KYGP…NSDQ. The segment covering 783–795 has biased composition (basic and acidic residues); the sequence is AEEKQLSESEYVG. 4 PXXP repeats span residues 797 to 800, 830 to 833, 871 to 874, and 889 to 892; these read PRQP, PGGP, PGNP, and PGSP. Over residues 907-921 the composition is skewed to basic and acidic residues; the sequence is DKSDFITFGKKEETK.

Its subcellular location is the cell membrane. Its function is as follows. Potential calcium-dependent cell-adhesion protein. May be involved in the establishment and maintenance of specific neuronal connections in the brain. In Pan troglodytes (Chimpanzee), this protein is Protocadherin alpha-2 (PCDHA2).